Reading from the N-terminus, the 286-residue chain is Probable syntaxin-7B (286 aa).

Over 1 to 257 (MTDRQPLISK…YVYKSSYRKK (257 aa)) the chain is Cytoplasmic. Residues 97 to 107 (LSTSNKKESSH) show a composition bias toward basic and acidic residues. Residues 97–160 (LSTSNKKESS…TNNNNNNNNN (64 aa)) are disordered. Residues 114 to 160 (QQQQQQQNNGNSNNNGYNTRGGYNQQQQQQQQQYNDYTNNNNNNNNN) are compositionally biased toward low complexity. The 63-residue stretch at 185 to 247 (NRILDERNAN…EDAVVELEKA (63 aa)) folds into the t-SNARE coiled-coil homology domain. Residues 258-278 (MIIFVICLLVTLVAVGIFLAI) form a helical; Anchor for type IV membrane protein membrane-spanning segment. Residues 279–286 (YYGVIKKK) lie on the Vesicular side of the membrane.

The protein belongs to the syntaxin family.

Its subcellular location is the membrane. The protein is Probable syntaxin-7B (syn7B) of Dictyostelium discoideum (Social amoeba).